The primary structure comprises 560 residues: Nibrin homolog (560 aa).

The 63-residue stretch at 25–87 (YKVGRKDCDV…YGTFFNKVQG (63 aa)) folds into the FHA domain. The 76-residue stretch at 115–190 (TFRLSFVPIV…KQIVLGDWFK (76 aa)) folds into the BRCT domain. The Nuclear localization signal motif lies at 511 to 518 (YKRGTVID).

Belongs to the Nibrin family. Component of the MRN complex composed of two heterodimers RAD50 and MRE11 associated with a single NBS1.

The protein localises to the nucleus. It localises to the chromosome. In terms of biological role, component of the MRN complex, which plays a central role in double-strand break (DSB) repair, DNA recombination, maintenance of telomere integrity and meiosis. The MRN complex is involved in the repair of DNA double-strand breaks (DSBs) via homologous recombination (HR), an error-free mechanism which primarily occurs during S and G2 phases. The complex (1) mediates the end resection of damaged DNA, which generates proper single-stranded DNA, a key initial steps in HR, and is (2) required for the recruitment of other repair factors and efficient activation of ATM and ATR upon DNA damage. The MRN complex possesses single-strand endonuclease activity and double-strand-specific 3'-5' exonuclease activity, which are provided by MRE11, to initiate end resection, which is required for single-strand invasion and recombination. Within the MRN complex, NBS1 acts as a protein-protein adapter, which specifically recognizes and binds phosphorylated proteins, promoting their recruitment to DNA damage sites. Recruits MRE11 and RAD50 components of the MRN complex to DSBs in response to DNA damage. The chain is Nibrin homolog from Oryza sativa subsp. indica (Rice).